The following is a 161-amino-acid chain: Regulator of ribonuclease activity A (161 aa).

This sequence belongs to the RraA family. Homotrimer. Binds to both RNA-binding sites in the C-terminal region of Rne and to RhlB.

The protein resides in the cytoplasm. Functionally, globally modulates RNA abundance by binding to RNase E (Rne) and regulating its endonucleolytic activity. Can modulate Rne action in a substrate-dependent manner by altering the composition of the degradosome. Modulates RNA-binding and helicase activities of the degradosome. The protein is Regulator of ribonuclease activity A of Idiomarina loihiensis (strain ATCC BAA-735 / DSM 15497 / L2-TR).